A 104-amino-acid polypeptide reads, in one-letter code: L-rhamnose mutarotase (104 aa).

Y18 contributes to the substrate binding site. The active-site Proton donor is the H22. Substrate contacts are provided by residues Y41 and 76 to 77 (WW).

The protein belongs to the rhamnose mutarotase family. In terms of assembly, homodimer.

The protein resides in the cytoplasm. It catalyses the reaction alpha-L-rhamnose = beta-L-rhamnose. Its pathway is carbohydrate metabolism; L-rhamnose metabolism. In terms of biological role, involved in the anomeric conversion of L-rhamnose. This chain is L-rhamnose mutarotase, found in Lactiplantibacillus plantarum (strain ATCC BAA-793 / NCIMB 8826 / WCFS1) (Lactobacillus plantarum).